The following is a 1031-amino-acid chain: Sister chromatid cohesion 1 protein 4 (1031 aa).

The segment at Thr461 to Gly481 is disordered. A Nuclear localization signal motif is present at residues Thr545–Pro552. Disordered stretches follow at residues Val661–Lys703, Glu742–Asn772, and Glu803–Thr835. Composition is skewed to basic and acidic residues over residues Glu742 to Glu762 and Glu803 to Gln825.

It belongs to the rad21 family. Component of the cohesin complex. Expressed in tissues containing dividing cells such as seedlings, flower buds, flowers and inflorescence meristem tissue.

It is found in the nucleus. Its subcellular location is the chromosome. The protein resides in the centromere. Functionally, involved in sister chromatid and centromere cohesion during mitosis. This is Sister chromatid cohesion 1 protein 4 (SYN4) from Arabidopsis thaliana (Mouse-ear cress).